We begin with the raw amino-acid sequence, 353 residues long: tRNA N6-adenosine threonylcarbamoyltransferase (353 aa).

Fe cation contacts are provided by His109 and His113. Residues 136–140, Asp169, Gly182, Asp186, and Asn284 contribute to the substrate site; that span reads TVSGG. Asp312 is a Fe cation binding site.

This sequence belongs to the KAE1 / TsaD family. Fe(2+) serves as cofactor.

It is found in the cytoplasm. It catalyses the reaction L-threonylcarbamoyladenylate + adenosine(37) in tRNA = N(6)-L-threonylcarbamoyladenosine(37) in tRNA + AMP + H(+). Functionally, required for the formation of a threonylcarbamoyl group on adenosine at position 37 (t(6)A37) in tRNAs that read codons beginning with adenine. Is involved in the transfer of the threonylcarbamoyl moiety of threonylcarbamoyl-AMP (TC-AMP) to the N6 group of A37, together with TsaE and TsaB. TsaD likely plays a direct catalytic role in this reaction. This is tRNA N6-adenosine threonylcarbamoyltransferase from Chlorobium limicola (strain DSM 245 / NBRC 103803 / 6330).